The primary structure comprises 337 residues: GDP-mannose transporter 1 (337 aa).

Residues 1–16 are Cytoplasmic-facing; sequence MSELKTGHAGHNPWAS. The chain crosses the membrane as a helical span at residues 17-37; that stretch reads VANSGPISILSYCGSSILMTV. Over 38 to 51 the chain is Lumenal; the sequence is TNKFVVNLKDFNMN. The helical transmembrane segment at 52–72 threads the bilayer; it reads FVMLFVQSLVCTITLIILRIL. The Cytoplasmic portion of the chain corresponds to 73-92; that stretch reads GYAKFRSLNKTDAKNWFPIS. Residues 93-113 traverse the membrane as a helical segment; the sequence is FLLVLMIYTSSKALQYLAVPI. Residues 114 to 119 are Lumenal-facing; that stretch reads YTIFKN. Asn-119 carries N-linked (GlcNAc...) asparagine glycosylation. A helical membrane pass occupies residues 120–140; it reads LTIILIAYGEVLFFGGSVTSM. At 141–144 the chain is on the cytoplasmic side; it reads ELSS. A helical transmembrane segment spans residues 145–165; that stretch reads FLLMVLSSVVATWGDQQAVAA. Over 166 to 180 the chain is Lumenal; that stretch reads KAASLAEGAAGAVAS. The chain crosses the membrane as a helical span at residues 181–201; that stretch reads FNPGYFWMFTNCITSALFVLI. Topologically, residues 202–215 are cytoplasmic; the sequence is MRKRIKLTNFKDFD. Residues 216-236 traverse the membrane as a helical segment; sequence TMFYNNVLALPILLLFSFCVE. Over 237–252 the chain is Lumenal; that stretch reads DWSSVNLTNNFSNDSL. N-linked (GlcNAc...) asparagine glycans are attached at residues Asn-242, Asn-246, and Asn-249. Residues 253-273 traverse the membrane as a helical segment; it reads TAMIISGVASVGISYCSGWCV. Over 274-279 the chain is Cytoplasmic; sequence RVTSST. The chain crosses the membrane as a helical span at residues 280-300; sequence TYSMVGALNKLPIALSGLIFF. Topologically, residues 301–304 are lumenal; that stretch reads DAPR. The helical transmembrane segment at 305–325 threads the bilayer; that stretch reads NFLSILSIFIGFLSGIIYAVA. Topologically, residues 326–337 are cytoplasmic; that stretch reads KQKKQQAQPLRK.

Belongs to the TPT transporter family. SLC35D subfamily. Homooligomer.

It localises to the golgi apparatus membrane. The protein localises to the cytoplasmic vesicle membrane. The protein resides in the endoplasmic reticulum membrane. In terms of biological role, involved in the import of GDP-mannose from the cytoplasm into the Golgi lumen. Defective copy causes severe glycosylation defect and abnormal retention of soluble endoplasmic reticulum proteins. Involved in vanadate sensitivity. The polypeptide is GDP-mannose transporter 1 (VRG4) (Saccharomyces cerevisiae (strain YJM789) (Baker's yeast)).